Here is a 309-residue protein sequence, read N- to C-terminus: uncharacterized protein (309 aa).

Residues 272 to 291 (PSLDAPSETVEAFPEPQKNL) are disordered.

This is an uncharacterized protein from Bacillus subtilis (strain 168).